The primary structure comprises 187 residues: Casparian strip membrane protein 5 (187 aa).

Residues 1-24 (MKSGQAEIVETSKGIQKSGLMSRR) are Cytoplasmic-facing. The helical transmembrane segment at 25-45 (IAILEFILRIVAFFNTIGSAI) threads the bilayer. Over 46 to 74 (LMGTTHETLPFFTQFIRFQAEYNDLPALT) the chain is Extracellular. A helical membrane pass occupies residues 75 to 95 (FFVVANAVVSGYLIMSLTLAF). Residues 96 to 107 (VHIVKRKTQNTR) are Cytoplasmic-facing. The helical transmembrane segment at 108–128 (ILLIVLDVAMLGLLSAGASSA) threads the bilayer. Topologically, residues 129–161 (AAIVYLAHNGNNKTNWFAICQQFNSFCERISGS) are extracellular. N-linked (GlcNAc...) asparagine glycosylation is present at N140. Residues 162–182 (LIGSFIAVVLLILLILLSAIA) form a helical membrane-spanning segment. The Cytoplasmic segment spans residues 183–187 (LSRRH).

This sequence belongs to the Casparian strip membrane proteins (CASP) family. In terms of assembly, homodimer and heterodimers.

It is found in the cell membrane. Its function is as follows. Regulates membrane-cell wall junctions and localized cell wall deposition. Required for establishment of the Casparian strip membrane domain (CSD) and the subsequent formation of Casparian strips, a cell wall modification of the root endodermis that determines an apoplastic barrier between the intraorganismal apoplasm and the extraorganismal apoplasm and prevents lateral diffusion. The polypeptide is Casparian strip membrane protein 5 (Arabidopsis lyrata subsp. lyrata (Lyre-leaved rock-cress)).